The sequence spans 590 residues: Beta-glucosidase 29 (590 aa).

An N-terminal signal peptide occupies residues 1–21 (MNVQIFILLLIISWLTPKITS). A beta-D-glucoside is bound by residues Gln48, His151, and 196–197 (NE). The active-site Proton donor is the Glu197. Cysteines 216 and 224 form a disulfide. Asn255 and Asn331 each carry an N-linked (GlcNAc...) asparagine glycan. Tyr341 is a binding site for a beta-D-glucoside. A glycan (N-linked (GlcNAc...) asparagine) is linked at Asn371. A beta-D-glucoside contacts are provided by residues Glu413, Trp463, 470 to 471 (EW), and Phe479. Residue Glu413 is the Nucleophile of the active site. N-linked (GlcNAc...) asparagine glycans are attached at residues Asn522 and Asn553.

This sequence belongs to the glycosyl hydrolase 1 family.

The catalysed reaction is Hydrolysis of terminal, non-reducing beta-D-glucosyl residues with release of beta-D-glucose.. The polypeptide is Beta-glucosidase 29 (Arabidopsis thaliana (Mouse-ear cress)).